Here is a 320-residue protein sequence, read N- to C-terminus: (+)-corvol ether B synthase/(+)-corvol ether A synthase ((2E,6E)-farnesyl diphosphate cyclizing) (320 aa).

Mg(2+) contacts are provided by aspartate 78 and aspartate 83. The short motif at 78–83 (DDLFVD) is the DDXXXD motif element. Arginine 171 lines the substrate pocket. Mg(2+) is bound by residues asparagine 217, serine 221, and glutamate 225.

This sequence belongs to the terpene synthase family. Mg(2+) serves as cofactor.

It catalyses the reaction (2E,6E)-farnesyl diphosphate + H2O = (+)-corvol ether B + diphosphate. The catalysed reaction is (2E,6E)-farnesyl diphosphate + H2O = (+)-corvol ether A + diphosphate. It functions in the pathway secondary metabolite biosynthesis; terpenoid biosynthesis. Its function is as follows. Catalyzes the conversion of (2E,6E)-farnesyl diphosphate (FPP) into (+)-corvol ether A and (+)-corvol ether B via a 1,10-cyclization, which requires isomerization of FPP to nerolidyl diphosphate (NPP) and then abstraction of the pyrophosphate from intermediate NPP leading to a (E,Z)-germacradienyl (helminthogermacradienyl) cation. The preferred substrate is (2E,6E)-farnesyl diphosphate (FPP), however geranyl diphosphate (GPP) is also able to produce small amounts of several acyclic and cyclic monoterpenes, with linalool as the main product. This Kitasatospora setae (strain ATCC 33774 / DSM 43861 / JCM 3304 / KCC A-0304 / NBRC 14216 / KM-6054) (Streptomyces setae) protein is (+)-corvol ether B synthase/(+)-corvol ether A synthase ((2E,6E)-farnesyl diphosphate cyclizing).